We begin with the raw amino-acid sequence, 267 residues long: Interleukin-1 beta (267 aa).

Residues 1–114 constitute a propeptide that is removed on maturation; that stretch reads MAIVPEPAKE…ETCNDDFVCD (114 aa).

Belongs to the IL-1 family. As to quaternary structure, (Microbial infection) Interacts with African swine fever virus (ASFV) protein L83L. Monomer. In its precursor form, weakly interacts with full-length MEFV; the mature cytokine does not interact at all. Interacts with integrins ITGAV:ITGBV and ITGA5:ITGB1; integrin-binding is required for IL1B signaling. Interacts with cargo receptor TMED10; the interaction is direct and is required for the secretion of IL1B mature form. Interacts with HSP90AB1; the interaction facilitates cargo translocation into the ERGIC. Interacts with HSP90B1; the interaction facilitates cargo translocation into the ERGIC.

Its subcellular location is the cytoplasm. It localises to the cytosol. It is found in the secreted. The protein resides in the lysosome. The protein localises to the extracellular exosome. Functionally, potent pro-inflammatory cytokine. Initially discovered as the major endogenous pyrogen, induces prostaglandin synthesis, neutrophil influx and activation, T-cell activation and cytokine production, B-cell activation and antibody production, and fibroblast proliferation and collagen production. Promotes Th17 differentiation of T-cells. Synergizes with IL12/interleukin-12 to induce IFNG synthesis from T-helper 1 (Th1) cells. Plays a role in angiogenesis by inducing VEGF production synergistically with TNF and IL6. Involved in transduction of inflammation downstream of pyroptosis: its mature form is specifically released in the extracellular milieu by passing through the gasdermin-D (GSDMD) pore. In Sus scrofa (Pig), this protein is Interleukin-1 beta (IL1B).